A 242-amino-acid polypeptide reads, in one-letter code: MSKSRLTVFSFVRRFLLRLMVVLAVFWGGGIALFSVAPVPFSAVMVERQVSAWLHGNFRYVAHSDWVSMDQISPWMGLAVIAAEDQKFPEHWGFDVASIEQALAHNERNENRIRGASTISQQTAKNLFLWDGRSWVRKGLEAGLTLGIETVWSKKRILTVYLNIAEFGDGVFGVEAAAQRYFHKPASKLTRSEAALLAAVLPNPLRFKVSAPSGYVRSRQAWILRQMYQLGGEPFMQQHQLD.

Residues 19-39 form a helical membrane-spanning segment; it reads LMVVLAVFWGGGIALFSVAPV.

It belongs to the glycosyltransferase 51 family.

The protein localises to the cell inner membrane. It carries out the reaction [GlcNAc-(1-&gt;4)-Mur2Ac(oyl-L-Ala-gamma-D-Glu-L-Lys-D-Ala-D-Ala)](n)-di-trans,octa-cis-undecaprenyl diphosphate + beta-D-GlcNAc-(1-&gt;4)-Mur2Ac(oyl-L-Ala-gamma-D-Glu-L-Lys-D-Ala-D-Ala)-di-trans,octa-cis-undecaprenyl diphosphate = [GlcNAc-(1-&gt;4)-Mur2Ac(oyl-L-Ala-gamma-D-Glu-L-Lys-D-Ala-D-Ala)](n+1)-di-trans,octa-cis-undecaprenyl diphosphate + di-trans,octa-cis-undecaprenyl diphosphate + H(+). The protein operates within cell wall biogenesis; peptidoglycan biosynthesis. Its function is as follows. Peptidoglycan polymerase that catalyzes glycan chain elongation from lipid-linked precursors. The protein is Biosynthetic peptidoglycan transglycosylase of Escherichia coli (strain SMS-3-5 / SECEC).